The primary structure comprises 779 residues: MPTTYVPINQPIGDGEDVIDTNRFTNIPETQNFDQFVTIDKIAEENRPLSVDSDREFLNSKYRHYREVIWDRAKTFITLSSTAIVIGCIAGFLQVFTETLVNWKTGHCQRNWLLNKSFCCNGVVNEVTSTSNLLLKRQEFECEAQGLWIAWKGHVSPFIIFMLLSVLFALISTLLVKYVAPMATGSGISEIKVWVSGFEYNKEFLGFLTLVIKSVALPLAISSGLSVGKEGPSVHYATCCGYLLTKWLLRDTLTYSSQYEYITAASGAGVAVAFGAPIGGVLFGLEEIASANRFNSSTLWKSYYVALVAITTLKYIDPFRNGRVILFNVTYDRDWKVQEIPIFIALGIFGGLYGKYISKWNINFIHFRKMYLSSWPVQEVLFLATLTALISYFNEFLKLDMTESMGILFHECVKNDNTSTFSHRLCQLDENTHAFEFLKIFTSLCFATVIRALLVVVSYGARVPAGIFVPSMAVGATFGRAVSLLVERFISGPSVITPGAYAFLGAAATLSGITNLTLTVVVIMFELTGAFMYIIPLMIVVAITRIILSTSGISGGIADQMIMVNGFPYLEDEQDEEEEETLEKYTAEQLMSSKLITINETIYLSELESLLYDSASEYSVHGFPITKDEDKFEKEKRCIGYVLKRHLASKIMMQSVNSTKAQTTLVYFNKSNEELGHRENCIGFKDIMNESPISVKKAVPVTLLFRMFKELGCKTIIVEESGILKGLVTAKDILRFKRIKYREVHGAKFTYNEALDRRCWSVIHFIIKRFTTNRNGNVI.

Residues Met-1 to Thr-75 are Cytoplasmic-facing. Residues Phe-76–Phe-96 traverse the membrane as a helical segment. The Lumenal portion of the chain corresponds to Thr-97–His-154. Residues Val-155–Leu-175 traverse the membrane as a helical segment. Topologically, residues Val-176–Lys-177 are cytoplasmic. The helical transmembrane segment at Tyr-178–Phe-198 threads the bilayer. Over Glu-199–Glu-203 the chain is Lumenal. Residues Phe-204–Gly-224 form a helical membrane-spanning segment. Residues Leu-225–Ala-264 lie on the Cytoplasmic side of the membrane. A helical transmembrane segment spans residues Ala-265–Leu-285. The Lumenal segment spans residues Glu-286–Ser-296. Residues Ser-297–Phe-319 traverse the membrane as a helical segment. At Arg-320–Lys-336 the chain is on the cytoplasmic side. The chain crosses the membrane as a helical span at residues Val-337–Ile-357. The Lumenal segment spans residues Ser-358 to Lys-369. Residues Met-370–Ile-390 traverse the membrane as a helical segment. At Ser-391 to Glu-436 the chain is on the cytoplasmic side. The chain crosses the membrane as a helical span at residues Phe-437–Val-457. Residues Ser-458–Ala-465 are Lumenal-facing. Residues Gly-466–Val-486 traverse the membrane as a helical segment. The Cytoplasmic portion of the chain corresponds to Glu-487 to Ala-500. Residues Tyr-501–Ile-523 traverse the membrane as a helical segment. Over Met-524–Gly-529 the chain is Lumenal. The chain crosses the membrane as a helical span at residues Ala-530–Gly-552. The Cytoplasmic segment spans residues Ile-553–Ile-779. 2 consecutive CBS domains span residues Met-591–Thr-659 and Met-688–Val-744.

This sequence belongs to the chloride channel (TC 2.A.49) family. Homodimer. Interacts with GET3. Proteolytically processed in the secretory pathway by protease KEX2 within the first extracellular loop. However, both the N- and C-terminal products of the cleavage reaction are required for assembly of a functional channel.

It localises to the golgi apparatus membrane. The protein resides in the endosome membrane. The protein localises to the prevacuolar compartment membrane. Anion/proton exchange transporter involved in iron and copper cation homeostasis. Involved in intracellular iron metabolism during growth on fermentable and non fermentable carbon sources. Required for proper copper-loading and maturation of multicopper oxidase FET3. Important for adjusting intracellular compartment pH to more alkaline pH under iron limitation. May also transport chloride ions through the plasma membrane. The polypeptide is Anion/proton exchange transporter GEF1 (GEF1) (Saccharomyces cerevisiae (strain ATCC 204508 / S288c) (Baker's yeast)).